A 44-amino-acid chain; its full sequence is uncharacterized protein (44 aa).

The helical transmembrane segment at 4-24 (ISSILIRGGGVLIVVILLLWI) threads the bilayer.

It is found in the membrane. This is an uncharacterized protein from Ornithodoros (relapsing fever ticks).